We begin with the raw amino-acid sequence, 413 residues long: Glucose-1-phosphate adenylyltransferase (413 aa).

Alpha-D-glucose 1-phosphate is bound by residues Y102, G167, 182–183 (EK), and S200.

Belongs to the bacterial/plant glucose-1-phosphate adenylyltransferase family. In terms of assembly, homotetramer.

It carries out the reaction alpha-D-glucose 1-phosphate + ATP + H(+) = ADP-alpha-D-glucose + diphosphate. Its pathway is glycan biosynthesis; glycogen biosynthesis. Its function is as follows. Involved in the biosynthesis of ADP-glucose, a building block required for the elongation reactions to produce glycogen. Catalyzes the reaction between ATP and alpha-D-glucose 1-phosphate (G1P) to produce pyrophosphate and ADP-Glc. The protein is Glucose-1-phosphate adenylyltransferase of Deinococcus radiodurans (strain ATCC 13939 / DSM 20539 / JCM 16871 / CCUG 27074 / LMG 4051 / NBRC 15346 / NCIMB 9279 / VKM B-1422 / R1).